The chain runs to 222 residues: Interleukin-12 subunit alpha (222 aa).

The signal sequence occupies residues 1 to 25 (MCPLRSLFLMATLVFLNHLDHLSLA). 3 cysteine pairs are disulfide-bonded: Cys40–Cys113, Cys67–Cys199, and Cys88–Cys126. 2 N-linked (GlcNAc...) asparagine glycosylation sites follow: Asn96 and Asn174.

This sequence belongs to the IL-6 superfamily. In terms of assembly, heterodimer with IL12B; disulfide-linked. This heterodimer is known as interleukin IL-12. Heterodimer with EBI3/IL27B; not disulfide-linked. This heterodimer is known as interleukin IL-35. Interacts with NBR1; this interaction promotes IL-12 secretion.

The protein localises to the secreted. Heterodimerizes with IL12B to form the IL-12 cytokine or with EBI3/IL27B to form the IL-35 cytokine. IL-12 is primarily produced by professional antigen-presenting cells (APCs) such as B-cells and dendritic cells (DCs) as well as macrophages and granulocytes and regulates T-cell and natural killer-cell responses, induces the production of interferon-gamma (IFN-gamma), favors the differentiation of T-helper 1 (Th1) cells and is an important link between innate resistance and adaptive immunity. Mechanistically, exerts its biological effects through a receptor composed of IL12R1 and IL12R2 subunits. Binding to the receptor results in the rapid tyrosine phosphorylation of a number of cellular substrates including the JAK family kinases TYK2 and JAK2. In turn, recruited STAT4 gets phosphorylated and translocates to the nucleus where it regulates cytokine/growth factor responsive genes. As part of IL-35, plays essential roles in maintaining the immune homeostasis of the liver microenvironment and also functions as an immune-suppressive cytokine. Mediates biological events through unconventional receptors composed of IL12RB2 and gp130/IL6ST heterodimers or homodimers. Signaling requires the transcription factors STAT1 and STAT4, which form a unique heterodimer that binds to distinct DNA sites. In Lama glama (Llama), this protein is Interleukin-12 subunit alpha (IL12A).